The sequence spans 302 residues: Enolase-phosphatase E1 (302 aa).

The span at 1–10 (MSDSRLRRRQ) shows a compositional bias: basic residues. The disordered stretch occupies residues 1–25 (MSDSRLRRRQGTAGTDNKRRADGPH). Basic and acidic residues predominate over residues 16–25 (DNKRRADGPH). 2 residues coordinate Mg(2+): Asp40 and Glu42. Substrate-binding positions include 183-184 (SS) and Lys217. Asp242 contacts Mg(2+).

This sequence belongs to the HAD-like hydrolase superfamily. MasA/MtnC family. As to quaternary structure, monomer. The cofactor is Mg(2+).

The protein resides in the cytoplasm. It localises to the nucleus. It catalyses the reaction 5-methylsulfanyl-2,3-dioxopentyl phosphate + H2O = 1,2-dihydroxy-5-(methylsulfanyl)pent-1-en-3-one + phosphate. The protein operates within amino-acid biosynthesis; L-methionine biosynthesis via salvage pathway; L-methionine from S-methyl-5-thio-alpha-D-ribose 1-phosphate: step 3/6. It functions in the pathway amino-acid biosynthesis; L-methionine biosynthesis via salvage pathway; L-methionine from S-methyl-5-thio-alpha-D-ribose 1-phosphate: step 4/6. Bifunctional enzyme that catalyzes the enolization of 2,3-diketo-5-methylthiopentyl-1-phosphate (DK-MTP-1-P) into the intermediate 2-hydroxy-3-keto-5-methylthiopentenyl-1-phosphate (HK-MTPenyl-1-P), which is then dephosphorylated to form the acireductone 1,2-dihydroxy-3-keto-5-methylthiopentene (DHK-MTPene). This Branchiostoma floridae (Florida lancelet) protein is Enolase-phosphatase E1.